A 607-amino-acid chain; its full sequence is MKRKLDANDVPVPTEGSDAIKENVTFASLGLDARLLQGIAKQNFQSPTLVQSKAIPLTLEGRDILARAKTGSGKTAAYLLPILHSILKRKELSSTQCTTALILVPTRELADQVYKTVESFTAFCAKDVRAVNLTQRVSDAVQRSLLADSPDIVIATPARASLNANTSALSLANLTHMVIDEADLVLSYGYDEDLQNVAKIMPKGVQTVLMSATLTSEVETLKGLFCRNPEVLKLEEAEDEGEGVSQFVVKCAEDEKFLLTYVIFKLKLIKGKCIIFVGDIDRCYRLKLFLEQFGTRSCILNSQLPVNSRIHVVEEFNKNVYDIIIASDEHEVLGDEDEPKSGDAEEVEADDADEEKEDAKDAKKETKQPSKKKQKTGKKDKEYGVSRGIDFKNVACVLNFDLPTSSKSYTHRIGRTARAGQTGMALSFVIPSEQYRKHKPTSIESAKNDEKVLAKIVKHQAKKGKEVKPYNFDMKQVDAFRYRMGDALRAVTSIAVQEAKTREIRQELMKSDKLKRHFEENPGDLYHLRHDGELRPARVQAHLKHVPDYLLPKEGKKGITGGDVGFVGMHKTTENRIRKARAANKAKGRGKGRKSDPLKTFKAKSKK.

The short motif at 24–52 (VTFASLGLDARLLQGIAKQNFQSPTLVQS) is the Q motif element. Residues 55-232 (IPLTLEGRDI…GLFCRNPEVL (178 aa)) form the Helicase ATP-binding domain. Position 68-75 (68-75 (AKTGSGKT)) interacts with ATP. A DEAD box motif is present at residues 180 to 183 (DEAD). The 233-residue stretch at 243 to 475 (GVSQFVVKCA…EVKPYNFDMK (233 aa)) folds into the Helicase C-terminal domain. Residues 332-343 (VLGDEDEPKSGD) show a composition bias toward basic and acidic residues. Disordered stretches follow at residues 332 to 380 (VLGD…GKKD) and 573 to 607 (TENRIRKARAANKAKGRGKGRKSDPLKTFKAKSKK). Residues 344-356 (AEEVEADDADEEK) are compositionally biased toward acidic residues. A compositionally biased stretch (basic and acidic residues) spans 357 to 368 (EDAKDAKKETKQ). The segment covering 578 to 592 (RKARAANKAKGRGKG) has biased composition (basic residues).

This sequence belongs to the DEAD box helicase family. DDX56/DBP9 subfamily.

The protein localises to the nucleus. It is found in the nucleolus. The enzyme catalyses ATP + H2O = ADP + phosphate + H(+). Functionally, ATP-binding RNA helicase involved in the biogenesis of 60S ribosomal subunits and is required for the normal formation of 25S and 5.8S rRNAs. The protein is ATP-dependent RNA helicase dbp9 (dbp9) of Botryotinia fuckeliana (strain B05.10) (Noble rot fungus).